Here is a 149-residue protein sequence, read N- to C-terminus: Secreted RxLR effector protein 47 (149 aa).

A signal peptide spans 1 to 22; that stretch reads MICLLPLIAVMLFVFATHTVLA. The short motif at 57 to 79 is the RxLR-dEER element; that stretch reads RFLRQETTFEEKPSVNDVHAEER.

It belongs to the RxLR effector family.

Its subcellular location is the secreted. The protein localises to the host membrane. Its function is as follows. Secreted effector that completely suppresses the host cell death induced by cell death-inducing proteins. The chain is Secreted RxLR effector protein 47 from Plasmopara viticola (Downy mildew of grapevine).